A 453-amino-acid chain; its full sequence is MAQDIFMDPWQSATSFAMEDEDMGMPSGKYARMEDEMGENKERFARENHSEIERRRRNKMTHYINELAEMVPQCASLGRKPDKLTILRMAVSHMKGIRGHTAQDETSYKPSFLTDQELKHLILEAANGFLFVVCCQTGKVLYVADSITPVLNLKQEDWLQRNLNELIHPDDQDKIRDQLCGSEVSVNKVLDLKSGSVKREGASTRVHMSCRRGFICRMRVGALEPLHRLRNRRPLFQHAGQNYVVMHCTGYIKNAPPQGINAPASSCLVAIARLQVASMPVCADPTSTNQFSVRVSEDGKMTFIDARVSDLIGLSSDQLIGRYWWNLAHPADEKTLQDSFVALLSDQPMRINIRVRTSTDYIPCTVSAYKFMNPYSEQFEYVVATHQIAPQEDINNWVTAPTVPQPQASEFGELGGAPSAVDYGQSSSGGWRPEAQGAPQAQWQWDPMNGYNQ.

A bHLH domain is found at 44 to 97 (FARENHSEIERRRRNKMTHYINELAEMVPQCASLGRKPDKLTILRMAVSHMKGI). PAS domains are found at residues 115 to 193 (DQEL…LDLK) and 277 to 347 (ASMP…LSDQ). The region spanning 348–392 (PMRINIRVRTSTDYIPCTVSAYKFMNPYSEQFEYVVATHQIAPQE) is the PAC domain. Residues 410–453 (EFGELGGAPSAVDYGQSSSGGWRPEAQGAPQAQWQWDPMNGYNQ) form a disordered region.

Interacts with hif-1. Heterodimer; efficient DNA binding requires dimerization with another bHLH protein. Forms a heterodimer with ahr-1; binds DNA as heterodimer. Forms a heterodimer with PAS domain-containing protein cky-1; binds DNA as heterodimer. As to expression, expressed in many cell types throughout development, including hypodermal cells, intestinal cells, pharyngeal cells, and neurons. Expressed in every cell during embryo.

Its subcellular location is the nucleus. Functionally, transcription factor. Efficient DNA binding requires dimerization with another bHLH protein, such as cky-1 or ahr-1. Regulates transcription of target genes, probably acting in complex with cky-1. Has a role in cellular differentiation. Required for pharyngeal development. In collaboration with ahr-1 it is involved in RMEL/R and SDQR neuron cell migration. Acts in the cellular response to hypoxia. Involved in aggregation behavior by regulating soluble guanylate cyclase gene expression in the URX neurons. This Caenorhabditis elegans protein is Aryl hydrocarbon receptor nuclear translocator homolog.